The primary structure comprises 337 residues: Undecaprenyl-phosphate 4-deoxy-4-formamido-L-arabinose transferase (337 aa).

2 helical membrane passes run 235-255 (LSII…LLIV) and 270-290 (FVLF…MGLL).

It belongs to the glycosyltransferase 2 family.

It is found in the cell inner membrane. It catalyses the reaction UDP-4-deoxy-4-formamido-beta-L-arabinose + di-trans,octa-cis-undecaprenyl phosphate = 4-deoxy-4-formamido-alpha-L-arabinopyranosyl di-trans,octa-cis-undecaprenyl phosphate + UDP. It participates in glycolipid biosynthesis; 4-amino-4-deoxy-alpha-L-arabinose undecaprenyl phosphate biosynthesis; 4-amino-4-deoxy-alpha-L-arabinose undecaprenyl phosphate from UDP-4-deoxy-4-formamido-beta-L-arabinose and undecaprenyl phosphate: step 1/2. The protein operates within bacterial outer membrane biogenesis; lipopolysaccharide biosynthesis. Functionally, catalyzes the transfer of 4-deoxy-4-formamido-L-arabinose from UDP to undecaprenyl phosphate. The modified arabinose is attached to lipid A and is required for resistance to polymyxin and cationic antimicrobial peptides. The sequence is that of Undecaprenyl-phosphate 4-deoxy-4-formamido-L-arabinose transferase from Pseudomonas syringae pv. syringae (strain B728a).